A 503-amino-acid polypeptide reads, in one-letter code: ATP synthase subunit alpha (503 aa).

Residue 169–176 (GDRKTGKT) coordinates ATP.

It belongs to the ATPase alpha/beta chains family. F-type ATPases have 2 components, CF(1) - the catalytic core - and CF(0) - the membrane proton channel. CF(1) has five subunits: alpha(3), beta(3), gamma(1), delta(1), epsilon(1). CF(0) has three main subunits: a(1), b(2) and c(9-12). The alpha and beta chains form an alternating ring which encloses part of the gamma chain. CF(1) is attached to CF(0) by a central stalk formed by the gamma and epsilon chains, while a peripheral stalk is formed by the delta and b chains.

It is found in the cell membrane. It catalyses the reaction ATP + H2O + 4 H(+)(in) = ADP + phosphate + 5 H(+)(out). Its function is as follows. Produces ATP from ADP in the presence of a proton gradient across the membrane. The alpha chain is a regulatory subunit. The sequence is that of ATP synthase subunit alpha from Lactobacillus delbrueckii subsp. bulgaricus (strain ATCC BAA-365 / Lb-18).